Reading from the N-terminus, the 455-residue chain is UDP-glycosyltransferase 2 (455 aa).

It belongs to the UDP-glycosyltransferase family.

The catalysed reaction is exophillate + UDP-alpha-D-galactose = phaeomoniecin D + UDP + H(+). Its pathway is secondary metabolite biosynthesis. Functionally, catalyzes the second glycosylation step during phaeomoniecin D biosynthesis, the further O-galactosylation of exophillic acid (produced by the O-glycosyltransferase OGT1) to yield the 4-O-beta-D-galactoside phaeomoniecin D. In Phaeomoniella chlamydospora (Phaeoacremonium chlamydosporum), this protein is UDP-glycosyltransferase 2.